Consider the following 387-residue polypeptide: Phosphoglycerate kinase (387 aa).

Substrate contacts are provided by residues 21–23 (DLN), arginine 36, 59–62 (HLGR), arginine 113, and arginine 146. Residues lysine 197, glutamate 314, and 340-343 (GGDT) each bind ATP.

The protein belongs to the phosphoglycerate kinase family. As to quaternary structure, monomer.

It localises to the cytoplasm. It carries out the reaction (2R)-3-phosphoglycerate + ATP = (2R)-3-phospho-glyceroyl phosphate + ADP. It participates in carbohydrate degradation; glycolysis; pyruvate from D-glyceraldehyde 3-phosphate: step 2/5. The sequence is that of Phosphoglycerate kinase from Pseudomonas putida (strain GB-1).